Here is a 288-residue protein sequence, read N- to C-terminus: Ribosomal RNA small subunit methyltransferase A (288 aa).

The segment covering 1-14 has biased composition (polar residues); the sequence is MSKNQGGNKHQGGS. The tract at residues 1-21 is disordered; the sequence is MSKNQGGNKHQGGSKTHLGHR. The S-adenosyl-L-methionine site is built by Asn-29, Leu-31, Gly-56, Glu-77, Asp-102, and Asn-122.

Belongs to the class I-like SAM-binding methyltransferase superfamily. rRNA adenine N(6)-methyltransferase family. RsmA subfamily.

The protein resides in the cytoplasm. It carries out the reaction adenosine(1518)/adenosine(1519) in 16S rRNA + 4 S-adenosyl-L-methionine = N(6)-dimethyladenosine(1518)/N(6)-dimethyladenosine(1519) in 16S rRNA + 4 S-adenosyl-L-homocysteine + 4 H(+). Specifically dimethylates two adjacent adenosines (A1518 and A1519) in the loop of a conserved hairpin near the 3'-end of 16S rRNA in the 30S particle. May play a critical role in biogenesis of 30S subunits. The polypeptide is Ribosomal RNA small subunit methyltransferase A (Idiomarina loihiensis (strain ATCC BAA-735 / DSM 15497 / L2-TR)).